Consider the following 290-residue polypeptide: Cbb3-type cytochrome c oxidase subunit FixP (290 aa).

The chain crosses the membrane as a helical span at residues 33–53 (WWVITFYITIVWAIGYWIVYP). 2 Cytochrome c domains span residues 109 to 198 (LARA…RSLS) and 206 to 287 (YDAA…HSLG). The heme c site is built by cysteine 122, cysteine 125, histidine 126, methionine 173, cysteine 219, cysteine 222, histidine 223, and methionine 264.

Belongs to the CcoP / FixP family. As to quaternary structure, component of the cbb3-type cytochrome c oxidase at least composed of FixN, FixO, FixQ and FixP. Heme c is required as a cofactor.

The protein resides in the cell inner membrane. Its pathway is energy metabolism; oxidative phosphorylation. Its function is as follows. C-type cytochrome. Part of the cbb3-type cytochrome c oxidase complex. FixP subunit is required for transferring electrons from donor cytochrome c via its heme groups to FixO subunit. From there, electrons are shuttled to the catalytic binuclear center of FixN subunit where oxygen reduction takes place. The complex also functions as a proton pump. This Bradyrhizobium sp. (strain ORS 278) protein is Cbb3-type cytochrome c oxidase subunit FixP.